A 507-amino-acid chain; its full sequence is ATP synthase subunit alpha, chloroplastic (507 aa).

170–177 serves as a coordination point for ATP; it reads GDRQTGKT.

Belongs to the ATPase alpha/beta chains family. F-type ATPases have 2 components, CF(1) - the catalytic core - and CF(0) - the membrane proton channel. CF(1) has five subunits: alpha(3), beta(3), gamma(1), delta(1), epsilon(1). CF(0) has four main subunits: a, b, b' and c.

It is found in the plastid. The protein localises to the chloroplast thylakoid membrane. It carries out the reaction ATP + H2O + 4 H(+)(in) = ADP + phosphate + 5 H(+)(out). In terms of biological role, produces ATP from ADP in the presence of a proton gradient across the membrane. The alpha chain is a regulatory subunit. This Cucumis sativus (Cucumber) protein is ATP synthase subunit alpha, chloroplastic.